The primary structure comprises 211 residues: ATP-dependent Clp protease proteolytic subunit (211 aa).

Residue S114 is the Nucleophile of the active site. Residue H139 is part of the active site.

It belongs to the peptidase S14 family. Fourteen ClpP subunits assemble into 2 heptameric rings which stack back to back to give a disk-like structure with a central cavity, resembling the structure of eukaryotic proteasomes.

Its subcellular location is the cytoplasm. It catalyses the reaction Hydrolysis of proteins to small peptides in the presence of ATP and magnesium. alpha-casein is the usual test substrate. In the absence of ATP, only oligopeptides shorter than five residues are hydrolyzed (such as succinyl-Leu-Tyr-|-NHMec, and Leu-Tyr-Leu-|-Tyr-Trp, in which cleavage of the -Tyr-|-Leu- and -Tyr-|-Trp bonds also occurs).. Functionally, cleaves peptides in various proteins in a process that requires ATP hydrolysis. Has a chymotrypsin-like activity. Plays a major role in the degradation of misfolded proteins. This chain is ATP-dependent Clp protease proteolytic subunit, found in Pseudomonas fluorescens (strain Pf0-1).